We begin with the raw amino-acid sequence, 100 residues long: Urease subunit gamma (100 aa).

It belongs to the urease gamma subunit family. As to quaternary structure, heterotrimer of UreA (gamma), UreB (beta) and UreC (alpha) subunits. Three heterotrimers associate to form the active enzyme.

The protein localises to the cytoplasm. The catalysed reaction is urea + 2 H2O + H(+) = hydrogencarbonate + 2 NH4(+). The protein operates within nitrogen metabolism; urea degradation; CO(2) and NH(3) from urea (urease route): step 1/1. This is Urease subunit gamma from Rhodopseudomonas palustris (strain BisB18).